Here is an 89-residue protein sequence, read N- to C-terminus: Small ribosomal subunit protein uS17 (89 aa).

The protein belongs to the universal ribosomal protein uS17 family. In terms of assembly, part of the 30S ribosomal subunit.

Functionally, one of the primary rRNA binding proteins, it binds specifically to the 5'-end of 16S ribosomal RNA. This Bacteroides fragilis (strain ATCC 25285 / DSM 2151 / CCUG 4856 / JCM 11019 / LMG 10263 / NCTC 9343 / Onslow / VPI 2553 / EN-2) protein is Small ribosomal subunit protein uS17.